Consider the following 406-residue polypeptide: MTTPANAQNASKTWELSLYELHRTPQEAIMDGTEIAVSPRSLHSELMCPICLDMLKNTMTTKECLHRFCSDCIVTALRSGNKECPTCRKKLVSKRSLRPDPNFDALISKIYPSREEYEAHQDRVLIRLSRLHNQQALSSSIEEGLRMQAMHRAQRVRRPIPGSDQTTTMSGGEGEPGEGEGDGEDVSSDSAPDSAPGPAPKRPRGGGAGGSSVGTGGGGTGGVGGGAGSEDSGDRGGTLGGGTLGPPSPPGAPSPPEPGGEIELVFRPHPLLVEKGEYCQTRYVKTTGNATVDHLSKYLALRIALERRQQQEAGEPGGPGGGASDTGGPDGCGGEGGGAGGGDGPEEPALPSLEGVSEKQYTIYIAPGGGAFTTLNGSLTLELVNEKFWKVSRPLELCYAPTKDPK.

Threonine 24 is subject to Phosphothreonine. The tract at residues 30 to 234 (MDGTEIAVSP…GGAGSEDSGD (205 aa)) is necessary for transcriptional repression. Serine 38 bears the Phosphoserine mark. The segment at 48–88 (CPICLDMLKNTMTTKECLHRFCSDCIVTALRSGNKECPTCR) adopts an RING-type zinc-finger fold. Phosphoserine occurs at positions 140, 187, and 190. Disordered regions lie at residues 148–263 (QAMH…GEIE) and 309–354 (QQQE…PSLE). Residues 175–187 (EPGEGEGDGEDVS) are compositionally biased toward acidic residues. Residues 201-204 (KRPR) carry the Nuclear localization signal motif. The span at 205–228 (GGGAGGSSVGTGGGGTGGVGGGAG) shows a compositional bias: gly residues. Phosphothreonine is present on residues threonine 215 and threonine 220. 2 positions are modified to phosphoserine: serine 229 and serine 232. The segment at 230-406 (EDSGDRGGTL…LCYAPTKDPK (177 aa)) is necessary for interaction with CBX2. The segment covering 235 to 244 (RGGTLGGGTL) has biased composition (gly residues). Residues 246–258 (PPSPPGAPSPPEP) show a composition bias toward pro residues. 2 positions are modified to phosphoserine: serine 248 and serine 254. Over residues 315–343 (EPGGPGGGASDTGGPDGCGGEGGGAGGGD) the composition is skewed to gly residues.

As to quaternary structure, component of chromatin-associated Polycomb (PcG) complexes. Interacts with BMI1. Part of the E2F6.com-1 complex in G0 phase composed of E2F6, MGA, MAX, TFDP1, CBX3, BAT8, EUHMTASE1, RING1, RNF2/RING2 MBLR, L3MBTL2 and YAF2. Interacts with CBX2 and PCGF6. Component of a PRC1-like complex. Component of repressive BCOR complex containing Polycomb group subcomplex at least composed of RYBP, PCGF1, BCOR and RNF2/RING2. Interacts with PCGF2, RNF2; CBX6, CBX7 and CBX8. Interacts with PHC2. Interacts with MN1. Interacts with USP26.

The protein localises to the nucleus. The protein resides in the nucleus speckle. It carries out the reaction S-ubiquitinyl-[E2 ubiquitin-conjugating enzyme]-L-cysteine + [acceptor protein]-L-lysine = [E2 ubiquitin-conjugating enzyme]-L-cysteine + N(6)-ubiquitinyl-[acceptor protein]-L-lysine.. It functions in the pathway protein modification; protein ubiquitination. Its function is as follows. Constitutes one of the E3 ubiquitin-protein ligases that mediate monoubiquitination of 'Lys-119' of histone H2A, thereby playing a central role in histone code and gene regulation. H2A 'Lys-119' ubiquitination gives a specific tag for epigenetic transcriptional repression and participates in X chromosome inactivation of female mammals. Essential component of a Polycomb group (PcG) multiprotein PRC1-like complex, a complex class required to maintain the transcriptionally repressive state of many genes, including Hox genes, throughout development. PcG PRC1 complex acts via chromatin remodeling and modification of histones, rendering chromatin heritably changed in its expressibility. Compared to RNF2/RING2, it does not have the main E3 ubiquitin ligase activity on histone H2A, and it may rather act as a modulator of RNF2/RING2 activity. This chain is E3 ubiquitin-protein ligase RING1, found in Homo sapiens (Human).